Reading from the N-terminus, the 94-residue chain is Integration host factor subunit beta (94 aa).

It belongs to the bacterial histone-like protein family. Heterodimer of an alpha and a beta chain.

Its function is as follows. This protein is one of the two subunits of integration host factor, a specific DNA-binding protein that functions in genetic recombination as well as in transcriptional and translational control. The protein is Integration host factor subunit beta of Pseudomonas paraeruginosa (strain DSM 24068 / PA7) (Pseudomonas aeruginosa (strain PA7)).